Consider the following 311-residue polypeptide: Methionyl-tRNA formyltransferase (311 aa).

110 to 113 (SLLP) provides a ligand contact to (6S)-5,6,7,8-tetrahydrofolate.

The protein belongs to the Fmt family.

The catalysed reaction is L-methionyl-tRNA(fMet) + (6R)-10-formyltetrahydrofolate = N-formyl-L-methionyl-tRNA(fMet) + (6S)-5,6,7,8-tetrahydrofolate + H(+). In terms of biological role, attaches a formyl group to the free amino group of methionyl-tRNA(fMet). The formyl group appears to play a dual role in the initiator identity of N-formylmethionyl-tRNA by promoting its recognition by IF2 and preventing the misappropriation of this tRNA by the elongation apparatus. In Streptococcus equi subsp. equi (strain 4047), this protein is Methionyl-tRNA formyltransferase.